We begin with the raw amino-acid sequence, 150 residues long: Globin-3 (150 aa).

Positions 11 to 150 (PLSAAEKTKI…MICILLRSAY (140 aa)) constitute a Globin domain. Residues His-74 and His-106 each coordinate heme b.

The protein belongs to the globin family. As to quaternary structure, monomer.

In Petromyzon marinus (Sea lamprey), this protein is Globin-3.